Reading from the N-terminus, the 253-residue chain is Dihydroanticapsin 7-dehydrogenase (253 aa).

9-31 lines the NAD(+) pocket; the sequence is LITGGASGIGYAAVQAFLGQQAN. Residue S139 coordinates substrate. The Proton acceptor role is filled by Y152.

This sequence belongs to the short-chain dehydrogenases/reductases (SDR) family.

It catalyses the reaction L-dihydroanticapsin + NAD(+) = L-anticapsin + NADH + H(+). The protein operates within antibiotic biosynthesis; bacilysin biosynthesis. Part of the bacABCDEFG operon responsible for the biosynthesis of bacilysin, an irreversible inactivator of the glutaminase domain of glucosamine synthetase. Catalyzes the dehydrogenation of the C7-hydroxyl group in the 4S-tetrahydrotyrosine (4S-H4Tyr) to yield anticapsin (epoxycyclohexanonyl-Ala). It is not able to oxidize the 4R-H4Tyr diastereomer and the dihydrobacilysin dipeptide (L-Ala-4S-H4Tyr dipeptide). The sequence is that of Dihydroanticapsin 7-dehydrogenase from Bacillus subtilis (strain 168).